Reading from the N-terminus, the 439-residue chain is SET domain-containing protein 4 (439 aa).

Positions 1 to 19 are enriched in basic residues; sequence MQRRRGRTERARKRRRRSS. Residues 1 to 25 form a disordered region; it reads MQRRRGRTERARKRRRRSSGSRAVN. An SET domain is found at 47–272; sequence TDLVPASFPG…KHQEVFICYG (226 aa). Tyr-271 contributes to the S-adenosyl-L-methionine binding site.

The protein belongs to the class V-like SAM-binding methyltransferase superfamily. SETD4 family. As to quaternary structure, forms a ternary complex with TBK1 and ZNF268; the interaction with TBK1 is ZNF268-dependent and leads to TBK1 monomethylation. Expressed in the forebrain subventricular zone, in quiescent neural stem cells.

It is found in the cytoplasm. Its subcellular location is the cytosol. The protein resides in the nucleus. The enzyme catalyses L-lysyl(4)-[histone H3] + S-adenosyl-L-methionine = N(6)-methyl-L-lysyl(4)-[histone H3] + S-adenosyl-L-homocysteine + H(+). The catalysed reaction is N(6)-methyl-L-lysyl(4)-[histone H3] + S-adenosyl-L-methionine = N(6),N(6)-dimethyl-L-lysyl(4)-[histone H3] + S-adenosyl-L-homocysteine + H(+). It carries out the reaction L-lysyl(20)-[histone H4] + S-adenosyl-L-methionine = N(6)-methyl-L-lysyl(20)-[histone H4] + S-adenosyl-L-homocysteine + H(+). It catalyses the reaction N(6)-methyl-L-lysyl(20)-[histone H4] + S-adenosyl-L-methionine = N(6),N(6)-dimethyl-L-lysyl(20)-[histone H4] + S-adenosyl-L-homocysteine + H(+). The enzyme catalyses N(6),N(6)-dimethyl-L-lysyl(20)-[histone H4] + S-adenosyl-L-methionine = N(6),N(6),N(6)-trimethyl-L-lysyl(20)-[histone H4] + S-adenosyl-L-homocysteine + H(+). The catalysed reaction is L-lysyl-[protein] + S-adenosyl-L-methionine = N(6)-methyl-L-lysyl-[protein] + S-adenosyl-L-homocysteine + H(+). Protein-lysine N-methyltransferase that methylates both histones and non-histone proteins. Via its catalytic activity, regulates many processes, including cell proliferation, cell differentiation, inflammatory response and apoptosis. Regulates the inflammatory response by mediating mono- and dimethylation of 'Lys-4' of histone H3 (H3K4me1 and H3K4me2, respectively), leading to activate the transcription of pro-inflammatory cytokines IL6 and TNF-alpha. Also involved in the regulation of stem cell quiescence by catalyzing the trimethylation of 'Lys-20' of histone H4 (H4K20me3), thereby promoting heterochromatin formation. In the brain, epigenetically controls quiescence of neural stem cells for sustaining a protected neural stem cell population and maintaining a stem cell reservoir for neurogenesis. Involved in proliferation, migration, paracrine and myogenic differentiation of bone marrow mesenchymal stem cells (BMSCs). Through the catalysis of XRCC5/Ku70 trimethylation, regulates BAX-mediated apoptosis. SETD4-catalyzed XRCC5 methylation results in XRCC5 translocation to the cytoplasm, where it interacts with BAX, sequestering it from the mitochondria, hence preventing BAX-mediated apoptosis. The polypeptide is SET domain-containing protein 4 (Mus musculus (Mouse)).